A 346-amino-acid polypeptide reads, in one-letter code: Anthranilate phosphoribosyltransferase (346 aa).

5-phospho-alpha-D-ribose 1-diphosphate-binding positions include Gly-88, 91–92 (GD), Thr-96, 98–101 (NIST), 116–124 (KHGNRAVSS), and Ala-128. An anthranilate-binding site is contributed by Gly-88. Position 100 (Ser-100) interacts with Mg(2+). An anthranilate-binding site is contributed by Asn-119. Residue Arg-174 coordinates anthranilate. The Mg(2+) site is built by Asp-233 and Glu-234.

Belongs to the anthranilate phosphoribosyltransferase family. In terms of assembly, homodimer. The cofactor is Mg(2+).

The enzyme catalyses N-(5-phospho-beta-D-ribosyl)anthranilate + diphosphate = 5-phospho-alpha-D-ribose 1-diphosphate + anthranilate. The protein operates within amino-acid biosynthesis; L-tryptophan biosynthesis; L-tryptophan from chorismate: step 2/5. Functionally, catalyzes the transfer of the phosphoribosyl group of 5-phosphorylribose-1-pyrophosphate (PRPP) to anthranilate to yield N-(5'-phosphoribosyl)-anthranilate (PRA). The protein is Anthranilate phosphoribosyltransferase of Paramagnetospirillum magneticum (strain ATCC 700264 / AMB-1) (Magnetospirillum magneticum).